Reading from the N-terminus, the 170-residue chain is MMAGMKIQLVCMILLAFSSWSLCSDSEEEMKALEADLLTNMHTSKISKASVSSWKMTLLNVCSFVNNLNSQAEETGEFREEELITRRKFPTALDGFSLEAMLTIYQLQKICHSRAFQQWELIQEDVLDAGNDKNEKEEVIKRKIPYILKRQLYENKPRRPYILKRGSYYY.

Residues 1–23 (MMAGMKIQLVCMILLAFSSWSLC) form the signal peptide.

Belongs to the neurotensin family. In terms of assembly, interacts with NTSR1. Interacts with SORT1. Interacts with SORL1. Post-translationally, neurotensin is cleaved and degraded by Angiotensin-converting enzyme (ACE) and neprilysin (MME).

Its subcellular location is the secreted. The protein localises to the cytoplasmic vesicle. It localises to the secretory vesicle. Its function is as follows. Neurotensin may play an endocrine or paracrine role in the regulation of fat metabolism. It causes contraction of smooth muscle. The protein is Neurotensin/neuromedin N (NTS) of Canis lupus familiaris (Dog).